The following is a 348-amino-acid chain: NADH-cytochrome b5 reductase 2 (348 aa).

A helical membrane pass occupies residues 41–61; sequence TLLYGAAAAAVAGAGYYFLGG. Residues 97–202 form the FAD-binding FR-type domain; sequence QGWVSLKLEE…KGPLPKYPWT (106 aa). 205 to 240 serves as a coordination point for FAD; the sequence is KHGHIALVAGGTGITPMFQLCRAIFNNPDDQTKVTL.

This sequence belongs to the flavoprotein pyridine nucleotide cytochrome reductase family. The cofactor is FAD.

It localises to the mitochondrion outer membrane. The catalysed reaction is 2 Fe(III)-[cytochrome b5] + NADH = 2 Fe(II)-[cytochrome b5] + NAD(+) + H(+). May mediate the reduction of outer membrane cytochrome b5. This is NADH-cytochrome b5 reductase 2 (MCR1) from Chaetomium globosum (strain ATCC 6205 / CBS 148.51 / DSM 1962 / NBRC 6347 / NRRL 1970) (Soil fungus).